We begin with the raw amino-acid sequence, 153 residues long: Phosphopantetheine adenylyltransferase (153 aa).

Substrate is bound at residue S11. ATP is bound by residues 11–12 and H19; that span reads SF. Residues K43, T75, and R89 each coordinate substrate. ATP-binding positions include 90–92, E100, and 124–130; these read GIR and LSFISSS.

The protein belongs to the bacterial CoaD family. As to quaternary structure, homohexamer. Requires Mg(2+) as cofactor.

The protein localises to the cytoplasm. The enzyme catalyses (R)-4'-phosphopantetheine + ATP + H(+) = 3'-dephospho-CoA + diphosphate. It functions in the pathway cofactor biosynthesis; coenzyme A biosynthesis; CoA from (R)-pantothenate: step 4/5. Functionally, reversibly transfers an adenylyl group from ATP to 4'-phosphopantetheine, yielding dephospho-CoA (dPCoA) and pyrophosphate. The sequence is that of Phosphopantetheine adenylyltransferase from Porphyromonas gingivalis (strain ATCC 33277 / DSM 20709 / CIP 103683 / JCM 12257 / NCTC 11834 / 2561).